Here is a 594-residue protein sequence, read N- to C-terminus: Type I restriction enzyme EcoEI specificity subunit (594 aa).

Belongs to the type-I restriction system S methylase family. The type I restriction/modification system is composed of three polypeptides R, M and S; the restriction enzyme has stoichiometry R(2)M(2)S(1) while the methyltransferase is M(2)S(1).

The specificity (S) subunit of a type I restriction enzyme; this subunit dictates DNA sequence specificity. The M and S subunits together form a methyltransferase (MTase) that methylates two adenine residues of the sequence 5'-GAGN(7)ATGC-3'. In the presence of the R subunit the complex can also act as an endonuclease, binding to the same target sequence but cutting the DNA some distance from this site. Whether the DNA is cut or modified depends on the methylation state of the target sequence. When the target site is unmodified, the DNA is cut. When the target site is hemimethylated, the complex acts as a maintenance MTase modifying the DNA so that both strands become methylated. After locating a non-methylated recognition site, the enzyme complex serves as a molecular motor that translocates DNA in an ATP-dependent manner until a collision occurs that triggers cleavage. This Escherichia coli protein is Type I restriction enzyme EcoEI specificity subunit.